Reading from the N-terminus, the 203-residue chain is Holliday junction branch migration complex subunit RuvA (203 aa).

The segment at 1 to 64 is domain I; the sequence is MIGRLRGIIL…EDAQLLYGFN (64 aa). Residues 65 to 142 form a domain II region; the sequence is NKQERMLFRE…KGLHGDLFTP (78 aa). Residues 143–154 are flexible linker; it reads AADLVLTSPNGP. Positions 155 to 203 are domain III; the sequence is TSDDAEQEAVAALVALGYKPQEASRMVSKIAKPDANSETLIREALRAAL.

Belongs to the RuvA family. In terms of assembly, homotetramer. Forms an RuvA(8)-RuvB(12)-Holliday junction (HJ) complex. HJ DNA is sandwiched between 2 RuvA tetramers; dsDNA enters through RuvA and exits via RuvB. An RuvB hexamer assembles on each DNA strand where it exits the tetramer. Each RuvB hexamer is contacted by two RuvA subunits (via domain III) on 2 adjacent RuvB subunits; this complex drives branch migration. In the full resolvosome a probable DNA-RuvA(4)-RuvB(12)-RuvC(2) complex forms which resolves the HJ.

The protein resides in the cytoplasm. In terms of biological role, the RuvA-RuvB-RuvC complex processes Holliday junction (HJ) DNA during genetic recombination and DNA repair, while the RuvA-RuvB complex plays an important role in the rescue of blocked DNA replication forks via replication fork reversal (RFR). RuvA specifically binds to HJ cruciform DNA, conferring on it an open structure. The RuvB hexamer acts as an ATP-dependent pump, pulling dsDNA into and through the RuvAB complex. HJ branch migration allows RuvC to scan DNA until it finds its consensus sequence, where it cleaves and resolves the cruciform DNA. The sequence is that of Holliday junction branch migration complex subunit RuvA from Enterobacter sp. (strain 638).